A 413-amino-acid polypeptide reads, in one-letter code: L-arginine-specific L-amino acid ligase (413 aa).

The region spanning 115–312 is the ATP-grasp domain; the sequence is KTKLKMEGIP…LWESSLNISV (198 aa). Residue 141–202 coordinates ATP; that stretch reads GEKLGWPIIV…EKCIEMEEFH (62 aa). Positions 268 and 281 each coordinate Mg(2+). Mn(2+)-binding residues include E268 and E281.

Homodimer. It depends on Mg(2+) as a cofactor. Requires Mn(2+) as cofactor. The cofactor is Co(2+).

It carries out the reaction an L-alpha-amino acid + L-arginine + ATP = L-arginyl-L-alpha-amino acid + ADP + phosphate + H(+). Its function is as follows. Catalyzes the synthesis of Arg-Xaa dipeptides in an ATP-dependent manner. Has strict specificity toward arginine as the N-terminal substrate. The sequence is that of L-arginine-specific L-amino acid ligase from Bacillus subtilis.